The sequence spans 418 residues: Inner capsid protein sigma-2 (418 aa).

The protein belongs to the orthoreovirus sigma-1 protein family. In terms of assembly, interacts with protein mu-NS; in viral inclusions.

It localises to the virion. Functionally, inner capsid (core) component. The protein is Inner capsid protein sigma-2 (S2) of Mammalia (T2J).